Reading from the N-terminus, the 313-residue chain is MAQVTMKEMLDAGVHFGHQTQRWNPKMKPYVYTARGGIHIIDLQKTVVRANKAAEFVKEIAANGGRLIFVGTKKQAIEPIQEAAAKCGQYYVTKRWLGGMMTNFETIKSSIDRLRKIDTMKEKGEFNYLTKKERAKLEKEYLRLTDFLAGIRDMKEMPSAMFVVDLPKEHIAVAEAKRLGIPVVAIADTNSDPESVDFAIPGNDDAIRSIKLFSNLVADAYLEGAKEWEGKLRTMTDKQSDVAKEAKADGKEEAPKRRGAGAKAGAKEAPKKSAGPAVVKATKSRKLVAAGTAEEVEIQAELEQGQSTDESAE.

Residues 233-256 are compositionally biased toward basic and acidic residues; that stretch reads RTMTDKQSDVAKEAKADGKEEAPK. Positions 233–293 are disordered; that stretch reads RTMTDKQSDV…SRKLVAAGTA (61 aa).

Belongs to the universal ribosomal protein uS2 family.

The protein is Small ribosomal subunit protein uS2 of Bdellovibrio bacteriovorus (strain ATCC 15356 / DSM 50701 / NCIMB 9529 / HD100).